We begin with the raw amino-acid sequence, 489 residues long: Occludin (489 aa).

Residues 1 to 51 are Cytoplasmic-facing; that stretch reads MMYEKRSYTGYGHPSSHYDYPPPSGPPGSFYLADVPPQHFYQWRSPPGIVR. Residues 45–248 form the MARVEL domain; the sequence is SPPGIVRILQ…ICYFAQKTRH (204 aa). Residues 52-74 traverse the membrane as a helical segment; it reads ILQGSVVILCLVIFACVASTLAW. At 75–112 the chain is on the extracellular side; the sequence is EYYGSGGLLGYGGGLGSYYNGYYGGYNGYYYGGLTNPR. The helical transmembrane segment at 113 to 137 threads the bilayer; sequence AANGFMIAMAVLCFLVTLGLVIAGL. The Cytoplasmic segment spans residues 138–147; it reads SKASGARSRR. Residues 148-172 traverse the membrane as a helical segment; that stretch reads FYLLVAVLSGLLAFVMLIASIVYVV. At 173-222 the chain is on the extracellular side; that stretch reads GVNPRAGLGASSGSLYYNQMLMLCNQMMSPVAGGIMNQYLYHYCMVDPQE. Cys-196 and Cys-216 are disulfide-bonded. A helical transmembrane segment spans residues 223–244; sequence AVAIVCGFLTVILLCVICYFAQ. The Cytoplasmic portion of the chain corresponds to 245–489; sequence KTRHKIWKYG…MVGGYDQSRS (245 aa). Ser-280 carries the post-translational modification Phosphoserine. Thr-285 carries the phosphothreonine modification. Ser-300 is subject to Phosphoserine. The tract at residues 308–382 is disordered; that stretch reads PAQENGYGHS…ESSGEQNRDD (75 aa). Pro residues predominate over residues 322–332; sequence PSVPPPEGPSP. Over residues 345 to 354 the composition is skewed to basic residues; it reads PARRGHRQRP. Phosphotyrosine occurs at positions 364 and 368. Positions 365-377 are enriched in polar residues; the sequence is ETDYTTAAESSGE. Thr-369 and Thr-370 each carry phosphothreonine; by PKC/PRKCH. Ser-374 carries the phosphoserine modification. An OCEL domain is found at 381-489; that stretch reads DDWASLYPPI…MVGGYDQSRS (109 aa). Residues 407 to 434 adopt a coiled-coil conformation; the sequence is LQRYKALCAEMDDIGTQLRQLSHELDCL. Ser-457 carries the phosphoserine modification.

Belongs to the ELL/occludin family. As to quaternary structure, interacts with TJP1/ZO1. Interacts with VAPA. Interacts with CLDN1, CLDN6, CLDN9, CLDN11, CLDN12 and CLDN17. Interacts with PLSCR1. Interacts with LSR, ILDR1 and ILDR2. Interacts with TJP2/ZO2. Dephosphorylated by PTPRJ. As to expression, localized at tight junctions of both epithelial and endothelial cells.

It localises to the cell membrane. It is found in the cell junction. Its subcellular location is the tight junction. Its function is as follows. May play a role in the formation and regulation of the tight junction (TJ) paracellular permeability barrier. The polypeptide is Occludin (OCLN) (Potorous tridactylus (Potoroo)).